Reading from the N-terminus, the 132-residue chain is Large ribosomal subunit protein uL14 (132 aa).

It belongs to the universal ribosomal protein uL14 family. Part of the 50S ribosomal subunit. Forms a cluster with proteins L3 and L24e, part of which may contact the 16S rRNA in 2 intersubunit bridges.

Functionally, binds to 23S rRNA. Forms part of two intersubunit bridges in the 70S ribosome. In Methanococcus aeolicus (strain ATCC BAA-1280 / DSM 17508 / OCM 812 / Nankai-3), this protein is Large ribosomal subunit protein uL14.